Reading from the N-terminus, the 316-residue chain is Biotin synthase (316 aa).

In terms of domain architecture, Radical SAM core spans 39 to 263 (NAIQCSTLLS…LFPKAYVRLS (225 aa)). C54, C58, and C61 together coordinate [4Fe-4S] cluster. 4 residues coordinate [2Fe-2S] cluster: C98, C129, C189, and R261.

This sequence belongs to the radical SAM superfamily. Biotin synthase family. In terms of assembly, homodimer. Requires [4Fe-4S] cluster as cofactor. [2Fe-2S] cluster is required as a cofactor.

The enzyme catalyses (4R,5S)-dethiobiotin + (sulfur carrier)-SH + 2 reduced [2Fe-2S]-[ferredoxin] + 2 S-adenosyl-L-methionine = (sulfur carrier)-H + biotin + 2 5'-deoxyadenosine + 2 L-methionine + 2 oxidized [2Fe-2S]-[ferredoxin]. Its pathway is cofactor biosynthesis; biotin biosynthesis; biotin from 7,8-diaminononanoate: step 2/2. In terms of biological role, catalyzes the conversion of dethiobiotin (DTB) to biotin by the insertion of a sulfur atom into dethiobiotin via a radical-based mechanism. The protein is Biotin synthase of Acidithiobacillus ferrooxidans (strain ATCC 23270 / DSM 14882 / CIP 104768 / NCIMB 8455) (Ferrobacillus ferrooxidans (strain ATCC 23270)).